We begin with the raw amino-acid sequence, 766 residues long: U3 small nucleolar RNA-associated protein 14 homolog C (766 aa).

A disordered region spans residues 14 to 42 (HQEELVDLPKNYPLSENEDEGDSDGERKH). A phosphoserine mark is found at Ser-28, Ser-51, Ser-76, and Ser-80. Lys-121 is covalently cross-linked (Glycyl lysine isopeptide (Lys-Gly) (interchain with G-Cter in SUMO2)). Thr-204 carries the phosphothreonine modification. Coiled-coil stretches lie at residues 216–245 (LEEAKMHRAELQRARALQSYYEAKARKEKK) and 316–346 (LEARQAMQEQLAKNKELTQKLQVASESEEEE). A disordered region spans residues 365–563 (MNVDGPNPWM…EQLINLQNFL (199 aa)). A compositionally biased stretch (low complexity) spans 396–405 (ELAAHEVSAS). Phosphoserine occurs at positions 403 and 405. Basic and acidic residues predominate over residues 407-434 (AEERPVAEEEILLREFEERQSLRKRSEL). Ser-443 bears the Phosphoserine mark. Lys-447 participates in a covalent cross-link: Glycyl lysine isopeptide (Lys-Gly) (interchain with G-Cter in SUMO2). Ser-451 bears the Phosphoserine mark. Residues 452–470 (QEVLSELRALSQKLKEKHQ) are a coiled coil. The span at 466 to 475 (KEKHQSRKQK) shows a compositional bias: basic residues. The span at 502–527 (RSERVQTLEELEELGKEDCFQNKELP) shows a compositional bias: basic and acidic residues. A Glycyl lysine isopeptide (Lys-Gly) (interchain with G-Cter in SUMO2) cross-link involves residue Lys-517. Residues 533–542 (GQQSERTPNN) are compositionally biased toward polar residues. Over residues 545 to 555 (DAPKEKKEKEQ) the composition is skewed to basic and acidic residues. At Ser-567 the chain carries Phosphoserine. Lys-732 participates in a covalent cross-link: Glycyl lysine isopeptide (Lys-Gly) (interchain with G-Cter in SUMO2). The segment at 734 to 766 (EDVGYQSSSRSDLPVIQRNPKRITTRHNKEEKL) is disordered.

The protein belongs to the UTP14 family. As to expression, expressed in testis.

It localises to the nucleus. It is found in the nucleolus. In terms of biological role, essential for spermatogenesis. May be required specifically for ribosome biogenesis and hence protein synthesis during male meiosis. The protein is U3 small nucleolar RNA-associated protein 14 homolog C (UTP14C) of Homo sapiens (Human).